A 1384-amino-acid polypeptide reads, in one-letter code: DNA-directed RNA polymerase subunit beta' (1384 aa).

Zn(2+)-binding residues include cysteine 81, cysteine 83, cysteine 96, and cysteine 99. Mg(2+)-binding residues include aspartate 472, aspartate 474, and aspartate 476.

Belongs to the RNA polymerase beta' chain family. The RNAP catalytic core consists of 2 alpha, 1 beta, 1 beta' and 1 omega subunit. When a sigma factor is associated with the core the holoenzyme is formed, which can initiate transcription. Requires Mg(2+) as cofactor. Zn(2+) is required as a cofactor.

It carries out the reaction RNA(n) + a ribonucleoside 5'-triphosphate = RNA(n+1) + diphosphate. In terms of biological role, DNA-dependent RNA polymerase catalyzes the transcription of DNA into RNA using the four ribonucleoside triphosphates as substrates. This chain is DNA-directed RNA polymerase subunit beta', found in Opitutus terrae (strain DSM 11246 / JCM 15787 / PB90-1).